Here is a 177-residue protein sequence, read N- to C-terminus: Arginine metabolism regulation protein I (177 aa).

The segment covering 1-12 (MTSNSDGSSTSP) has biased composition (polar residues). Disordered stretches follow at residues 1-82 (MTSN…TRRK) and 157-177 (NASDTPDATDTSPAQEQSPAN). Acidic residues predominate over residues 40–53 (QDQEGDFDEEDDDD). Low complexity predominate over residues 56 to 67 (SVSTSTPTPTIT). The MADS-box domain occupies 80 to 134 (RRKQPIRYIENKTRRHVTFSKRRHGIMKKAYELSVLTGANILLLILANSGLVYTF). Positions 158–177 (ASDTPDATDTSPAQEQSPAN) are enriched in polar residues.

Interacts with ARG81 and ARG82.

The protein resides in the nucleus. With ARG81, ARG82 and MCM1, coordinates the expression of arginine anabolic and catabolic genes in response to arginine. The polypeptide is Arginine metabolism regulation protein I (ARG80) (Saccharomyces cerevisiae (strain ATCC 204508 / S288c) (Baker's yeast)).